A 594-amino-acid chain; its full sequence is A-type ATP synthase subunit A (594 aa).

ATP is bound at residue glycine 236 to threonine 243.

Belongs to the ATPase alpha/beta chains family. In terms of assembly, has multiple subunits with at least A(3), B(3), C, D, E, F, H, I and proteolipid K(x).

Its subcellular location is the cell membrane. The catalysed reaction is ATP + H2O + 4 H(+)(in) = ADP + phosphate + 5 H(+)(out). In terms of biological role, component of the A-type ATP synthase that produces ATP from ADP in the presence of a proton gradient across the membrane. The A chain is the catalytic subunit. This is A-type ATP synthase subunit A from Pyrobaculum neutrophilum (strain DSM 2338 / JCM 9278 / NBRC 100436 / V24Sta) (Thermoproteus neutrophilus).